The following is a 282-amino-acid chain: Putative 4-diphosphocytidyl-2-C-methyl-D-erythritol kinase (282 aa).

The active site involves lysine 9. An ATP-binding site is contributed by proline 93–alanine 103. The active site involves aspartate 135.

The protein belongs to the GHMP kinase family. IspE subfamily.

The enzyme catalyses 4-CDP-2-C-methyl-D-erythritol + ATP = 4-CDP-2-C-methyl-D-erythritol 2-phosphate + ADP + H(+). Catalyzes the phosphorylation of the position 2 hydroxy group of 4-diphosphocytidyl-2C-methyl-D-erythritol. The protein is Putative 4-diphosphocytidyl-2-C-methyl-D-erythritol kinase of Staphylococcus haemolyticus (strain JCSC1435).